A 635-amino-acid chain; its full sequence is Chaperone protein HtpG (635 aa).

The tract at residues 1 to 337 is a; substrate-binding; that stretch reads MELKMHNVQE…SPDLPLNISR (337 aa). A b region spans residues 338 to 556; the sequence is ETLQNNRVVE…EGAMDLRMER (219 aa). The segment at 557–635 is c; that stretch reads FLREQKQLNY…LNNLLGKISV (79 aa).

This sequence belongs to the heat shock protein 90 family. As to quaternary structure, homodimer.

The protein resides in the cytoplasm. In terms of biological role, molecular chaperone. Has ATPase activity. This is Chaperone protein HtpG from Wolbachia pipientis wMel.